Consider the following 374-residue polypeptide: MKFELDTTDGRARRGRLIFDRGTVETPAFMPVGTYGTVKGMTPEEVRATGADILLGNTFHLWLRPGEEIMRKHGDLHDFMNWQRPILTDSGGFQVFSLGDIRKITEEGVHFRSPINGEKIFLDPEKSMQIQDALGSDVVMIFDECTPYPATEDEARKSMQMSLRWARRSRDEFDRLENPNSLFGIIQGGVYEDLRDESLKGLVDIGFDGYAVGGLAVGEPKADMHRILEHICPQIPADKPRYLMGVGKPEDLVEGVRRGVDMFDCVMPTRNARNGHLFTSEGVIKIRNARHRDDTSPLDTKCDCYTCKNYSRAYLYHLDRCNEILGARLNTIHNLRYYQMLMEGLRGAIETGTLDAFVADFYTSQGREVPELVN.

Aspartate 89 (proton acceptor) is an active-site residue. Residues 89-93 (DSGGF), aspartate 143, glutamine 187, and glycine 214 each bind substrate. Positions 245 to 251 (GVGKPED) are RNA binding. Aspartate 264 functions as the Nucleophile in the catalytic mechanism. Residues 269 to 273 (TRNAR) are RNA binding; important for wobble base 34 recognition. Residues cysteine 302, cysteine 304, cysteine 307, and histidine 333 each coordinate Zn(2+).

The protein belongs to the queuine tRNA-ribosyltransferase family. Homodimer. Within each dimer, one monomer is responsible for RNA recognition and catalysis, while the other monomer binds to the replacement base PreQ1. It depends on Zn(2+) as a cofactor.

It carries out the reaction 7-aminomethyl-7-carbaguanine + guanosine(34) in tRNA = 7-aminomethyl-7-carbaguanosine(34) in tRNA + guanine. It functions in the pathway tRNA modification; tRNA-queuosine biosynthesis. In terms of biological role, catalyzes the base-exchange of a guanine (G) residue with the queuine precursor 7-aminomethyl-7-deazaguanine (PreQ1) at position 34 (anticodon wobble position) in tRNAs with GU(N) anticodons (tRNA-Asp, -Asn, -His and -Tyr). Catalysis occurs through a double-displacement mechanism. The nucleophile active site attacks the C1' of nucleotide 34 to detach the guanine base from the RNA, forming a covalent enzyme-RNA intermediate. The proton acceptor active site deprotonates the incoming PreQ1, allowing a nucleophilic attack on the C1' of the ribose to form the product. After dissociation, two additional enzymatic reactions on the tRNA convert PreQ1 to queuine (Q), resulting in the hypermodified nucleoside queuosine (7-(((4,5-cis-dihydroxy-2-cyclopenten-1-yl)amino)methyl)-7-deazaguanosine). The sequence is that of Queuine tRNA-ribosyltransferase from Shewanella baltica (strain OS185).